The sequence spans 152 residues: MAKRVQVVLNEDILSLGRNGDLVDVAPGYARNFLLPFGKAVPVTPAVMKQVEHRRAKEAERQATLKQDAVAFRTALDTIGRFTVKKQTGGDDVLFGTVTNGDVAEAIESATKKEVDRRDITVPDIHRTGSYKVQVKLHSEVTAEINLEVVSY.

It belongs to the bacterial ribosomal protein bL9 family.

In terms of biological role, binds to the 23S rRNA. The protein is Large ribosomal subunit protein bL9 of Synechococcus sp. (strain CC9311).